Here is a 393-residue protein sequence, read N- to C-terminus: E3 ubiquitin-protein transferase RMND5B (393 aa).

The residue at position 1 (methionine 1) is an N-acetylmethionine. The LisH domain occupies 116-148 (QQQILQMAIVEHLYQQGMLSVAEELCQESTLNV). Residues 155-212 (PFLELNRILEALHEQDLGPALEWAVSHRQRLLELNSSLEFKLHRLHFIRLLAGGPAKQ) form the CTLH domain. Residues 338-379 (CPILRQQTSDSNPPIKLICGHVISRDALNKLINGGKLKCPYC) form an RING-Gid-type zinc finger.

Identified in the CTLH complex that contains GID4, RANBP9 and/or RANBP10, MKLN1, MAEA, RMND5A (or alternatively its paralog RMND5B), GID8, ARMC8, WDR26 and YPEL5. Within this complex, MAEA, RMND5A (or alternatively its paralog RMND5B), GID8, WDR26, and RANBP9 and/or RANBP10 form the catalytic core, while GID4, MKLN1, ARMC8 and YPEL5 have ancillary roles.

Its subcellular location is the cytoplasm. It is found in the cytosol. The enzyme catalyses S-ubiquitinyl-[E2 ubiquitin-conjugating enzyme]-L-cysteine + [acceptor protein]-L-lysine = [E2 ubiquitin-conjugating enzyme]-L-cysteine + N(6)-ubiquitinyl-[acceptor protein]-L-lysine.. Core component of the CTLH E3 ubiquitin-protein ligase complex that selectively accepts ubiquitin from UBE2H and mediates ubiquitination and subsequent proteasomal degradation of the transcription factor HBP1. MAEA and RMND5A are both required for catalytic activity of the CTLH E3 ubiquitin-protein ligase complex. Catalytic activity of the complex is required for normal cell proliferation. The CTLH E3 ubiquitin-protein ligase complex is not required for the degradation of enzymes involved in gluconeogenesis, such as FBP1. The protein is E3 ubiquitin-protein transferase RMND5B (RMND5B) of Homo sapiens (Human).